Reading from the N-terminus, the 318-residue chain is Beta-galactosidase small subunit (318 aa).

This sequence belongs to the bacterial beta-galactosidase small subunit family. Heterodimer of a large (LacL) and a small subunit (LacM).

It catalyses the reaction Hydrolysis of terminal non-reducing beta-D-galactose residues in beta-D-galactosides.. Its function is as follows. Component of a beta-galactosidase. The sequence is that of Beta-galactosidase small subunit from Lactobacillus helveticus (Lactobacillus suntoryeus).